Consider the following 292-residue polypeptide: Elongation factor Ts (292 aa).

Residues 81–84 are involved in Mg(2+) ion dislocation from EF-Tu; it reads TDFV.

It belongs to the EF-Ts family.

It localises to the cytoplasm. Its function is as follows. Associates with the EF-Tu.GDP complex and induces the exchange of GDP to GTP. It remains bound to the aminoacyl-tRNA.EF-Tu.GTP complex up to the GTP hydrolysis stage on the ribosome. This is Elongation factor Ts from Psychromonas ingrahamii (strain DSM 17664 / CCUG 51855 / 37).